The following is a 503-amino-acid chain: Aromatase (503 aa).

3 helical membrane passes run 19–39 (EVVPIASIAILLLTGFLLLVW), 53–73 (FLGIGPLISHCRFLWMGIGSA), and 303–323 (MLIAAPDTMSVSVFFMLFLIA). 2 residues coordinate substrate: D309 and M374. A heme-binding site is contributed by C437.

The protein belongs to the cytochrome P450 family. It depends on heme as a cofactor.

It localises to the endoplasmic reticulum membrane. Its subcellular location is the microsome membrane. The enzyme catalyses testosterone + 3 reduced [NADPH--hemoprotein reductase] + 3 O2 = 17beta-estradiol + formate + 3 oxidized [NADPH--hemoprotein reductase] + 4 H2O + 4 H(+). It catalyses the reaction androst-4-ene-3,17-dione + 3 reduced [NADPH--hemoprotein reductase] + 3 O2 = estrone + formate + 3 oxidized [NADPH--hemoprotein reductase] + 4 H2O + 4 H(+). The catalysed reaction is androst-4-ene-3,17-dione + reduced [NADPH--hemoprotein reductase] + O2 = 19-hydroxyandrost-4-ene-3,17-dione + oxidized [NADPH--hemoprotein reductase] + H2O + H(+). It carries out the reaction 19-hydroxyandrost-4-ene-3,17-dione + reduced [NADPH--hemoprotein reductase] + O2 = 19-oxo-androst-4-ene-3,17-dione + oxidized [NADPH--hemoprotein reductase] + 2 H2O + H(+). The enzyme catalyses 19-oxo-androst-4-ene-3,17-dione + reduced [NADPH--hemoprotein reductase] + O2 = estrone + formate + oxidized [NADPH--hemoprotein reductase] + H2O + 2 H(+). It catalyses the reaction estrone + reduced [NADPH--hemoprotein reductase] + O2 = 2-hydroxyestrone + oxidized [NADPH--hemoprotein reductase] + H2O + H(+). The catalysed reaction is 17beta-hydroxy-5alpha-androstan-3-one + reduced [NADPH--hemoprotein reductase] + O2 = 17beta,19-dihydroxy-3-oxo-5alpha-androstanone + oxidized [NADPH--hemoprotein reductase] + H2O + H(+). It carries out the reaction 17beta,19-dihydroxy-3-oxo-5alpha-androstanone + reduced [NADPH--hemoprotein reductase] + O2 = 17beta-hydroxy-3,19-dioxo-5alpha-androstanone + oxidized [NADPH--hemoprotein reductase] + 2 H2O + H(+). The enzyme catalyses 17beta-hydroxy-3,19-dioxo-5alpha-androstanone + reduced [NADPH--hemoprotein reductase] + O2 = 17beta-hydroxy-3-oxo-19-nor-5alpha-androst-1-ene + formate + oxidized [NADPH--hemoprotein reductase] + H2O + 2 H(+). It participates in steroid hormone biosynthesis. Functionally, a cytochrome P450 monooxygenase that catalyzes the conversion of C19 androgens, androst-4-ene-3,17-dione (androstenedione) and testosterone to the C18 estrogens, estrone and estradiol, respectively. Catalyzes three successive oxidations of C19 androgens: two conventional oxidations at C19 yielding 19-hydroxy and 19-oxo/19-aldehyde derivatives, followed by a third oxidative aromatization step that involves C1-beta hydrogen abstraction combined with cleavage of the C10-C19 bond to yield a phenolic A ring and formic acid. Alternatively, the third oxidative reaction yields a 19-norsteroid and formic acid. Converts dihydrotestosterone to delta1,10-dehydro 19-nordihydrotestosterone and may play a role in homeostasis of this potent androgen. Also displays 2-hydroxylase activity toward estrone. Mechanistically, uses molecular oxygen inserting one oxygen atom into a substrate, and reducing the second into a water molecule, with two electrons provided by NADPH via cytochrome P450 reductase (CPR; NADPH-ferrihemoprotein reductase). The protein is Aromatase (CYP19A1) of Capra hircus (Goat).